The chain runs to 736 residues: NADPH--cytochrome P450 reductase (736 aa).

Position 1 (Met1) is a topological domain, lumenal. The helical transmembrane segment at 2-24 (AVSSSSDVIVLSVGIILAALYLF) threads the bilayer. The Cytoplasmic portion of the chain corresponds to 25 to 736 (REQIFSAAKP…RNRLLLDVWS (712 aa)). Residues 66–216 (IVIFYGSQTG…DYLEWKDGMW (151 aa)) enclose the Flavodoxin-like domain. Residues 72–77 (SQTGTA), 123–126 (ATYG), 165–174 (LGNKTYEHYN), and Asp200 each bind FMN. Residues 269-546 (KNPYPAPIIA…EGPRGAYKQG (278 aa)) enclose the FAD-binding FR-type domain. Arg289 is a binding site for NADP(+). FAD contacts are provided by residues 456-459 (RYYS), 474-476 (TVV), Tyr480, and 495-498 (GVGS). NADP(+) is bound by residues Thr577, 648 to 649 (SR), and 659 to 663 (KIYVQ). Trp735 is a binding site for FAD.

The protein belongs to the NADPH--cytochrome P450 reductase family. In the N-terminal section; belongs to the flavodoxin family. This sequence in the C-terminal section; belongs to the flavoprotein pyridine nucleotide cytochrome reductase family. It depends on FAD as a cofactor. Requires FMN as cofactor.

It localises to the endoplasmic reticulum membrane. It is found in the mitochondrion outer membrane. The protein resides in the cell membrane. It carries out the reaction 2 oxidized [cytochrome P450] + NADPH = 2 reduced [cytochrome P450] + NADP(+) + H(+). Functionally, this enzyme is required for electron transfer from NADP to cytochrome P450 in microsomes. It can also provide electron transfer to heme oxygenase and cytochrome B5. Involved in ergosterol biosynthesis. The polypeptide is NADPH--cytochrome P450 reductase (CPR) (Phanerodontia chrysosporium (White-rot fungus)).